We begin with the raw amino-acid sequence, 91 residues long: Antitoxin RelJ (91 aa).

It belongs to the phD/YefM antitoxin family. As to quaternary structure, homodimer.

Antitoxin component of a type II toxin-antitoxin (TA) system. A probable antitoxin for the putative mRNA interferase RelK. In Mycobacterium tuberculosis (strain CDC 1551 / Oshkosh), this protein is Antitoxin RelJ (relJ).